We begin with the raw amino-acid sequence, 551 residues long: Trigger factor (551 aa).

Positions 165–250 (GDLVVLDFAG…ATDVRVPGET (86 aa)) constitute a PPIase FKBP-type domain. The disordered stretch occupies residues 442–551 (ADDDTIGKGH…APAKKKAAAE (110 aa)). Positions 458 to 472 (GHDHHDHDHDHDHAA) are enriched in basic and acidic residues. Low complexity predominate over residues 513 to 541 (EAAPAPKKAPAKKAAAAKAEEAPAAAPKK). Positions 542–551 (APAKKKAAAE) are enriched in basic residues.

Belongs to the FKBP-type PPIase family. Tig subfamily.

It localises to the cytoplasm. The catalysed reaction is [protein]-peptidylproline (omega=180) = [protein]-peptidylproline (omega=0). Involved in protein export. Acts as a chaperone by maintaining the newly synthesized protein in an open conformation. Functions as a peptidyl-prolyl cis-trans isomerase. The sequence is that of Trigger factor from Rhizorhabdus wittichii (strain DSM 6014 / CCUG 31198 / JCM 15750 / NBRC 105917 / EY 4224 / RW1) (Sphingomonas wittichii).